We begin with the raw amino-acid sequence, 129 residues long: Small ribosomal subunit protein uS11 (129 aa).

This sequence belongs to the universal ribosomal protein uS11 family. Part of the 30S ribosomal subunit. Interacts with proteins S7 and S18. Binds to IF-3.

In terms of biological role, located on the platform of the 30S subunit, it bridges several disparate RNA helices of the 16S rRNA. Forms part of the Shine-Dalgarno cleft in the 70S ribosome. This is Small ribosomal subunit protein uS11 from Pseudomonas entomophila (strain L48).